The sequence spans 101 residues: Small ribosomal subunit protein uS14 (101 aa).

The protein belongs to the universal ribosomal protein uS14 family. In terms of assembly, part of the 30S ribosomal subunit. Contacts proteins S3 and S10.

Functionally, binds 16S rRNA, required for the assembly of 30S particles and may also be responsible for determining the conformation of the 16S rRNA at the A site. This is Small ribosomal subunit protein uS14 from Paenarthrobacter aurescens (strain TC1).